The chain runs to 219 residues: Large ribosomal subunit protein uL4 (219 aa).

The disordered stretch occupies residues 45-103; it reads ARRQGTHATKTRGQVRGGGRKPYRQKGTGRARQGSIRAPQFTGGGTVHGPQPRDYDQRT. Over residues 62 to 73 the composition is skewed to basic residues; sequence GGRKPYRQKGTG.

This sequence belongs to the universal ribosomal protein uL4 family. Part of the 50S ribosomal subunit.

In terms of biological role, one of the primary rRNA binding proteins, this protein initially binds near the 5'-end of the 23S rRNA. It is important during the early stages of 50S assembly. It makes multiple contacts with different domains of the 23S rRNA in the assembled 50S subunit and ribosome. Its function is as follows. Forms part of the polypeptide exit tunnel. The sequence is that of Large ribosomal subunit protein uL4 from Corynebacterium kroppenstedtii (strain DSM 44385 / JCM 11950 / CIP 105744 / CCUG 35717).